The sequence spans 603 residues: Proline--tRNA ligase (603 aa).

It belongs to the class-II aminoacyl-tRNA synthetase family. ProS type 1 subfamily. Homodimer.

It localises to the cytoplasm. It carries out the reaction tRNA(Pro) + L-proline + ATP = L-prolyl-tRNA(Pro) + AMP + diphosphate. Catalyzes the attachment of proline to tRNA(Pro) in a two-step reaction: proline is first activated by ATP to form Pro-AMP and then transferred to the acceptor end of tRNA(Pro). As ProRS can inadvertently accommodate and process non-cognate amino acids such as alanine and cysteine, to avoid such errors it has two additional distinct editing activities against alanine. One activity is designated as 'pretransfer' editing and involves the tRNA(Pro)-independent hydrolysis of activated Ala-AMP. The other activity is designated 'posttransfer' editing and involves deacylation of mischarged Ala-tRNA(Pro). The misacylated Cys-tRNA(Pro) is not edited by ProRS. The chain is Proline--tRNA ligase from Paenarthrobacter aurescens (strain TC1).